The primary structure comprises 211 residues: Uracil phosphoribosyltransferase (211 aa).

5-phospho-alpha-D-ribose 1-diphosphate contacts are provided by residues Arg78, Arg103, and 130–138 (DPMLATGGT). Uracil contacts are provided by residues Ile195 and 200–202 (GDA). Asp201 contacts 5-phospho-alpha-D-ribose 1-diphosphate.

It belongs to the UPRTase family. Mg(2+) is required as a cofactor.

It carries out the reaction UMP + diphosphate = 5-phospho-alpha-D-ribose 1-diphosphate + uracil. The protein operates within pyrimidine metabolism; UMP biosynthesis via salvage pathway; UMP from uracil: step 1/1. Allosterically activated by GTP. Functionally, catalyzes the conversion of uracil and 5-phospho-alpha-D-ribose 1-diphosphate (PRPP) to UMP and diphosphate. The sequence is that of Uracil phosphoribosyltransferase from Arthrobacter sp. (strain FB24).